A 106-amino-acid chain; its full sequence is Translation initiation factor 1A 2 (106 aa).

The disordered stretch occupies residues 1 to 24; it reads MRKRREGTANNSPTPEVTRVRTPR. Residues 18–92 enclose the S1-like domain; that stretch reads TRVRTPRKEN…SKADVIWKYT (75 aa).

It belongs to the eIF-1A family.

Its function is as follows. Seems to be required for maximal rate of protein biosynthesis. Enhances ribosome dissociation into subunits and stabilizes the binding of the initiator Met-tRNA(I) to 40 S ribosomal subunits. This chain is Translation initiation factor 1A 2 (eIF1A2), found in Methanosarcina mazei (strain ATCC BAA-159 / DSM 3647 / Goe1 / Go1 / JCM 11833 / OCM 88) (Methanosarcina frisia).